A 502-amino-acid chain; its full sequence is UPF0371 protein CLL_A2797 (502 aa).

The protein belongs to the UPF0371 family.

This chain is UPF0371 protein CLL_A2797, found in Clostridium botulinum (strain Eklund 17B / Type B).